The chain runs to 314 residues: Homoserine kinase (314 aa).

95 to 105 (PHSRGLGSSAS) serves as a coordination point for ATP.

The protein belongs to the GHMP kinase family. Homoserine kinase subfamily.

It is found in the cytoplasm. The catalysed reaction is L-homoserine + ATP = O-phospho-L-homoserine + ADP + H(+). The protein operates within amino-acid biosynthesis; L-threonine biosynthesis; L-threonine from L-aspartate: step 4/5. Catalyzes the ATP-dependent phosphorylation of L-homoserine to L-homoserine phosphate. In Mycobacterium ulcerans (strain Agy99), this protein is Homoserine kinase.